The sequence spans 217 residues: MARKGILGTKLGMTQVFDENNRVVPVTVVKAGPNVVTRIRTLERDGYSAVQLAYGEISPRKVNKPVTGQYNSAGVNPRRYLAELRLDHPDAAAEYEVGQELTAEIFADATYVDVTGTSKGKGFSGTMKRHGFRGQGASHGAQAVHRRPGSIGGCATPARVFKGTRMAGRMGNDRVTVQNLLVHKVDTENGVLLIKGAVPGRTGGLVMVRSAIKRGEK.

The protein belongs to the universal ribosomal protein uL3 family. In terms of assembly, part of the 50S ribosomal subunit. Forms a cluster with proteins L14 and L19.

Its function is as follows. One of the primary rRNA binding proteins, it binds directly near the 3'-end of the 23S rRNA, where it nucleates assembly of the 50S subunit. In Mycobacterium leprae (strain TN), this protein is Large ribosomal subunit protein uL3.